A 224-amino-acid polypeptide reads, in one-letter code: PKHD-type hydroxylase Tgr7_2199 (224 aa).

Residues 78-176 form the Fe2OG dioxygenase domain; the sequence is KLSGAFFARY…RLVAVAWAES (99 aa). Fe cation is bound by residues histidine 96, aspartate 98, and histidine 157. 2-oxoglutarate is bound at residue arginine 167.

Fe(2+) is required as a cofactor. It depends on L-ascorbate as a cofactor.

This chain is PKHD-type hydroxylase Tgr7_2199, found in Thioalkalivibrio sulfidiphilus (strain HL-EbGR7).